We begin with the raw amino-acid sequence, 117 residues long: Large ribosomal subunit protein bL20 (117 aa).

This sequence belongs to the bacterial ribosomal protein bL20 family.

Functionally, binds directly to 23S ribosomal RNA and is necessary for the in vitro assembly process of the 50S ribosomal subunit. It is not involved in the protein synthesizing functions of that subunit. This Campylobacter lari (strain RM2100 / D67 / ATCC BAA-1060) protein is Large ribosomal subunit protein bL20.